Here is a 115-residue protein sequence, read N- to C-terminus: U3-lycotoxin-Ls1e (115 aa).

The first 20 residues, 1–20 (MKFVLLFGVLSLTLFSYSSA), serve as a signal peptide directing secretion. A propeptide spanning residues 21–44 (EMLDDFDQADEDELLSLIEKEEAR) is cleaved from the precursor. 4 disulfides stabilise this stretch: Cys-48–Cys-63, Cys-55–Cys-72, Cys-62–Cys-87, and Cys-74–Cys-85.

Belongs to the neurotoxin 19 (CSTX) family. 01 subfamily. Expressed by the venom gland.

It localises to the secreted. This is U3-lycotoxin-Ls1e from Lycosa singoriensis (Wolf spider).